The following is a 691-amino-acid chain: Elongation factor G (691 aa).

In terms of domain architecture, tr-type G spans 8–283 (EDYRNFGIMA…AVVDFLPSPI (276 aa)). Residues 17–24 (AHIDAGKT), 81–85 (DTPGH), and 135–138 (NKMD) each bind GTP.

Belongs to the TRAFAC class translation factor GTPase superfamily. Classic translation factor GTPase family. EF-G/EF-2 subfamily.

It is found in the cytoplasm. Catalyzes the GTP-dependent ribosomal translocation step during translation elongation. During this step, the ribosome changes from the pre-translocational (PRE) to the post-translocational (POST) state as the newly formed A-site-bound peptidyl-tRNA and P-site-bound deacylated tRNA move to the P and E sites, respectively. Catalyzes the coordinated movement of the two tRNA molecules, the mRNA and conformational changes in the ribosome. This Xanthobacter autotrophicus (strain ATCC BAA-1158 / Py2) protein is Elongation factor G.